Consider the following 305-residue polypeptide: MKIAIVGGPTAVGKTDIMIEVCEEIGAEIISMDSRQIYRYMDIGTAKPTPEQRKRVLHHMIDIIDPDEYYNAFMYRKDSLRAMEDVLRRGKIPVYVGGTGLYADALVRGIFEGVPADENIRKELRELERREPGILRKMLEELDPEAATRIHPNDLKRTIRALEVYMKTGRRISELQKEAKGDDRFFIIVLTRERYELYERINKRVDKMIEMGLVDEVKRLLGMGYSKDLNSMKTIGYKEVIDYLEGKYDFDKMVHLIKRNTRHFARRQIIWFKRYKEAVWYNLTFEDVGEVKEKLKKLIVENFSV.

8–15 (GPTAVGKT) is a binding site for ATP. Residue 10–15 (TAVGKT) participates in substrate binding. The interaction with substrate tRNA stretch occupies residues 33-36 (DSRQ).

The protein belongs to the IPP transferase family. Monomer. Mg(2+) serves as cofactor.

It catalyses the reaction adenosine(37) in tRNA + dimethylallyl diphosphate = N(6)-dimethylallyladenosine(37) in tRNA + diphosphate. Functionally, catalyzes the transfer of a dimethylallyl group onto the adenine at position 37 in tRNAs that read codons beginning with uridine, leading to the formation of N6-(dimethylallyl)adenosine (i(6)A). The chain is tRNA dimethylallyltransferase from Thermotoga maritima (strain ATCC 43589 / DSM 3109 / JCM 10099 / NBRC 100826 / MSB8).